The sequence spans 260 residues: 14-3-3-like protein (260 aa).

Residues Asp-240 to Tyr-260 form a disordered region. Residues Asp-247–Tyr-260 are compositionally biased toward basic and acidic residues.

Belongs to the 14-3-3 family.

The sequence is that of 14-3-3-like protein from Oenothera elata subsp. hookeri (Hooker's evening primrose).